The following is a 464-amino-acid chain: CD-NTase-associated protein 4 (464 aa).

The N-terminal endonuclease domain stretch occupies residues Met-1–Glu-228. The segment at Glu-229–Ile-464 is C-terminal SAVED domain.

It belongs to the Cap4 nuclease family. A monomer in the absence of cAAA, in its presence it forms oligomers.

With respect to regulation, DNase activity is activated upon ligand binding. In terms of biological role, effector DNase of a CBASS antivirus system. CBASS (cyclic oligonucleotide-based antiphage signaling system) provides immunity against bacteriophage. The CD-NTase protein synthesizes cyclic nucleotides in response to infection; these serve as specific second messenger signals. The signals activate a diverse range of effectors, leading to bacterial cell death and thus abortive phage infection. A type II-C CBASS system. Functionally, probably in the presence of its endogenous cyclic nucleotide (synthesized by the cognate CD-NTase protein in the CBASS operon), or of 2',3',3'-cyclic AMP-AMP-AMP (cAAA) synthesized by Acinetobacter sp. ATCC 27244, endonucleolytically degrades dsDNA in a non-sequence specific manner. It is not activated by other cyclic nucleotides. This Moraxella osloensis protein is CD-NTase-associated protein 4.